The following is a 102-amino-acid chain: Small ribosomal subunit protein uS10 (102 aa).

It belongs to the universal ribosomal protein uS10 family. In terms of assembly, part of the 30S ribosomal subunit.

In terms of biological role, involved in the binding of tRNA to the ribosomes. The chain is Small ribosomal subunit protein uS10 from Trichlorobacter lovleyi (strain ATCC BAA-1151 / DSM 17278 / SZ) (Geobacter lovleyi).